The primary structure comprises 201 residues: 3-mercaptopropionate dioxygenase (201 aa).

Residues His89, His91, and His142 each coordinate Fe cation.

This sequence belongs to the cysteine dioxygenase family. Forms homodimer in the crystal; however, there is no evidence that the dimer exists under physiological conditions or has biological significance. Fe(2+) is required as a cofactor.

The enzyme catalyses 3-sulfanylpropanoate + O2 = 3-sulfinopropanoate + H(+). Thiol dioxygenase that catalyzes the dioxygenation of 3-mercaptopropionate (3-MPA) to 3-sulfinopropionate (3-SPA). To a lesser extent (40-fold lower efficiency), is also able to oxidize cysteine to cysteine sulfinate (CSA). Cannot use N-acetyl-L-cysteine, homocysteine, and cysteamine as substrates. The physiological role of this enzyme is unclear. In Pseudomonas aeruginosa (strain ATCC 15692 / DSM 22644 / CIP 104116 / JCM 14847 / LMG 12228 / 1C / PRS 101 / PAO1), this protein is 3-mercaptopropionate dioxygenase.